A 321-amino-acid polypeptide reads, in one-letter code: Protein-L-histidine N-pros-methyltransferase (321 aa).

The signal sequence occupies residues 1–24; it reads MRLWLCWLGCYTLLLWALRRRMWA. An N-linked (GlcNAc...) asparagine glycan is attached at N89. Residues E177, N213, and Y298 each coordinate S-adenosyl-L-homocysteine.

It belongs to the METTL9 family.

It is found in the endoplasmic reticulum. The protein localises to the mitochondrion. It carries out the reaction L-histidyl-[protein] + S-adenosyl-L-methionine = N(pros)-methyl-L-histidyl-[protein] + S-adenosyl-L-homocysteine + H(+). Functionally, protein-histidine N-methyltransferase that specifically catalyzes 1-methylhistidine (pros-methylhistidine) methylation of target proteins. Mediates methylation of proteins with a His-x-His (HxH) motif (where 'x' is preferably a small amino acid); 1-methylhistidine modification may affect the binding of zinc and other metals to its target proteins. The polypeptide is Protein-L-histidine N-pros-methyltransferase (Gallus gallus (Chicken)).